Reading from the N-terminus, the 415-residue chain is MEATEQGPIDVEAVRADFPILEREVAGGEDLVYLDNAATSHTPEPVVDAIADYYRRYNSNVHRGLHELSQEASVAYEDAHDKLAAFVGGEDREEMVFTKNTTEAENLVAFAWGLNELGPGDEVVLTQMEHHASLVTWQQVADETGAEVKYIPITDDGHLDMDAAADMITDDTALVNAVHISNTLGTVNPVGELADIAHDHGAYIFVDGAQAAPTRAVDVQEIDADFYAFSGHKMLGPTGIGCLYGKRHLLAEMEPFLYGGDMIERVSYEDATWNDPPWKFEAGTPVIAQGIALAEAVDYLQDIGMDAIRAHEEALTEYAYDQLTMTDDVDVYGPPGDDRGAVVSFNVDGIHAHDLSSILNDYGVAIRAGDHCTQPLHDTLGVPASARASFYLYNTRDEVDALVAAVDEARQIFAP.

Lys-233 carries the N6-(pyridoxal phosphate)lysine modification. The Cysteine persulfide intermediate role is filled by Cys-372.

This sequence belongs to the class-V pyridoxal-phosphate-dependent aminotransferase family. Csd subfamily. Pyridoxal 5'-phosphate serves as cofactor.

It catalyses the reaction (sulfur carrier)-H + L-cysteine = (sulfur carrier)-SH + L-alanine. The sequence is that of Probable cysteine desulfurase (csd) from Halobacterium salinarum (strain ATCC 700922 / JCM 11081 / NRC-1) (Halobacterium halobium).